The chain runs to 392 residues: MMILTKNKPMIVSMGPHHPSMHGVLRLIVTLDGEDVLDCEPVLGYLHRGMEKIAENRTIVQYLPYVTRWDYLATMFTEAITVNAPEKLTNIQVPKRASYIRIIMLELSRIASHLLWLGPFMADIGAQTPFFYIFREREMIYDLFESATGMRMMHNYFRIGGVAVDLPYGWIDKCLDFCDYFLPKINEYERLITNNPIFLKRVEGIGTVTREEAINWGLSGPMLRASGVQWDLRKVDHYECYDELDWKIQWQKEGDSLARYLVRIGEMKESVKIIQQALKAIPGGPFENLEARRLNQGKNSEWNLFEYQFISKKPSPTFKLPKQEHYVRVEAPKGELGIFLIGDDSVFPWRLKIRSPGFINLQILPQLVKGMKLADIMTILGSIDIIMGEVDR.

It belongs to the complex I 49 kDa subunit family. NDH is composed of at least 16 different subunits, 5 of which are encoded in the nucleus.

It localises to the plastid. The protein localises to the chloroplast thylakoid membrane. It catalyses the reaction a plastoquinone + NADH + (n+1) H(+)(in) = a plastoquinol + NAD(+) + n H(+)(out). The enzyme catalyses a plastoquinone + NADPH + (n+1) H(+)(in) = a plastoquinol + NADP(+) + n H(+)(out). Functionally, NDH shuttles electrons from NAD(P)H:plastoquinone, via FMN and iron-sulfur (Fe-S) centers, to quinones in the photosynthetic chain and possibly in a chloroplast respiratory chain. The immediate electron acceptor for the enzyme in this species is believed to be plastoquinone. Couples the redox reaction to proton translocation, and thus conserves the redox energy in a proton gradient. The protein is NAD(P)H-quinone oxidoreductase subunit H, chloroplastic of Marchantia polymorpha (Common liverwort).